A 221-amino-acid polypeptide reads, in one-letter code: Tetraspanin-2 (221 aa).

Over 1-13 the chain is Cytoplasmic; the sequence is MGRFRGGLRCIKY. The chain crosses the membrane as a helical span at residues 14–34; the sequence is LLLGFNLLFWLAGSAVIAFGL. The Extracellular segment spans residues 35–54; sequence WFRFGGTIKDLSSEEKSPEY. The chain crosses the membrane as a helical span at residues 55–75; that stretch reads FYVGLYVLVGAGALMMAVGFF. Topologically, residues 76–90 are cytoplasmic; the sequence is GCCGAMRESQCVLGS. The chain crosses the membrane as a helical span at residues 91 to 111; sequence FFTCLLVIFAAEVTTGVFAFI. At 112-188 the chain is on the extracellular side; the sequence is GKDVAIRHVQ…ETIISVKLQL (77 aa). The N-linked (GlcNAc...) asparagine glycan is linked to N139. The chain crosses the membrane as a helical span at residues 189–209; sequence IGIVGIGIAGLTIFGMIFSMV. Over 210–221 the chain is Cytoplasmic; it reads LCCAIRNSRDVI.

The protein belongs to the tetraspanin (TM4SF) family. In terms of tissue distribution, expression is restricted to the nervous system.

It is found in the membrane. In terms of biological role, may play a role in signalling in oligodendrocytes in the early stages of their terminal differentiation into myelin-forming glia and may also function in stabilizing the mature sheath. In Rattus norvegicus (Rat), this protein is Tetraspanin-2 (Tspan2).